Reading from the N-terminus, the 123-residue chain is Small ribosomal subunit protein uS12 (123 aa).

The tract at residues 1-28 is disordered; sequence MPTIQQLIRKPRQPKVKRSKSMHLEQCP. The segment covering 9–21 has biased composition (basic residues); sequence RKPRQPKVKRSKS. At aspartate 89 the chain carries 3-methylthioaspartic acid.

The protein belongs to the universal ribosomal protein uS12 family. As to quaternary structure, part of the 30S ribosomal subunit. Contacts proteins S8 and S17. May interact with IF1 in the 30S initiation complex.

Functionally, with S4 and S5 plays an important role in translational accuracy. Its function is as follows. Interacts with and stabilizes bases of the 16S rRNA that are involved in tRNA selection in the A site and with the mRNA backbone. Located at the interface of the 30S and 50S subunits, it traverses the body of the 30S subunit contacting proteins on the other side and probably holding the rRNA structure together. The combined cluster of proteins S8, S12 and S17 appears to hold together the shoulder and platform of the 30S subunit. The protein is Small ribosomal subunit protein uS12 of Ruegeria sp. (strain TM1040) (Silicibacter sp.).